The primary structure comprises 77 residues: Small ribosomal subunit protein bS18 (77 aa).

Belongs to the bacterial ribosomal protein bS18 family. Part of the 30S ribosomal subunit. Forms a tight heterodimer with protein bS6.

Its function is as follows. Binds as a heterodimer with protein bS6 to the central domain of the 16S rRNA, where it helps stabilize the platform of the 30S subunit. This chain is Small ribosomal subunit protein bS18, found in Shouchella clausii (strain KSM-K16) (Alkalihalobacillus clausii).